A 37-amino-acid chain; its full sequence is Fructose-bisphosphate aldolase A (37 aa).

This sequence belongs to the class I fructose-bisphosphate aldolase family. Tetramer.

The enzyme catalyses beta-D-fructose 1,6-bisphosphate = D-glyceraldehyde 3-phosphate + dihydroxyacetone phosphate. The protein operates within carbohydrate degradation; glycolysis; D-glyceraldehyde 3-phosphate and glycerone phosphate from D-glucose: step 4/4. In terms of biological role, plays a key role in glycolysis and gluconeogenesis. The protein is Fructose-bisphosphate aldolase A of Thunnus albacares (Yellowfin tuna).